Here is a 519-residue protein sequence, read N- to C-terminus: Bifunctional purine biosynthesis protein PurH (519 aa).

One can recognise an MGS-like domain in the interval 1-147; that stretch reads MAKITRALIS…KNNHDVTVLV (147 aa).

The protein belongs to the PurH family.

It catalyses the reaction (6R)-10-formyltetrahydrofolate + 5-amino-1-(5-phospho-beta-D-ribosyl)imidazole-4-carboxamide = 5-formamido-1-(5-phospho-D-ribosyl)imidazole-4-carboxamide + (6S)-5,6,7,8-tetrahydrofolate. The catalysed reaction is IMP + H2O = 5-formamido-1-(5-phospho-D-ribosyl)imidazole-4-carboxamide. It participates in purine metabolism; IMP biosynthesis via de novo pathway; 5-formamido-1-(5-phospho-D-ribosyl)imidazole-4-carboxamide from 5-amino-1-(5-phospho-D-ribosyl)imidazole-4-carboxamide (10-formyl THF route): step 1/1. Its pathway is purine metabolism; IMP biosynthesis via de novo pathway; IMP from 5-formamido-1-(5-phospho-D-ribosyl)imidazole-4-carboxamide: step 1/1. The sequence is that of Bifunctional purine biosynthesis protein PurH from Trichlorobacter lovleyi (strain ATCC BAA-1151 / DSM 17278 / SZ) (Geobacter lovleyi).